We begin with the raw amino-acid sequence, 464 residues long: Argininosuccinate lyase (464 aa).

The protein belongs to the lyase 1 family. Argininosuccinate lyase subfamily.

It is found in the cytoplasm. It carries out the reaction 2-(N(omega)-L-arginino)succinate = fumarate + L-arginine. It participates in amino-acid biosynthesis; L-arginine biosynthesis; L-arginine from L-ornithine and carbamoyl phosphate: step 3/3. The polypeptide is Argininosuccinate lyase (Stutzerimonas stutzeri (strain A1501) (Pseudomonas stutzeri)).